A 309-amino-acid polypeptide reads, in one-letter code: Olfactory receptor 8U9 (309 aa).

The Extracellular portion of the chain corresponds to 1-28 (MTQINCTQVTEFILVGLTDRQELKMPLF). N5 carries N-linked (GlcNAc...) asparagine glycosylation. The chain crosses the membrane as a helical span at residues 29–49 (VLFLSIYLFTVVGNLGLILLI). At 50-56 (RTDEKLN) the chain is on the cytoplasmic side. Residues 57–77 (TPMYFFLSNLAFVDFCYSSVI) form a helical membrane-spanning segment. Topologically, residues 78–97 (TPKMLGNFLYKQNSISFNAC) are extracellular. A disulfide bond links C97 and C179. The helical transmembrane segment at 98-118 (AAQLGCFLAFMTAECLLLASM) threads the bilayer. Over 119–143 (AYDRYVAICNPLMYMVVMSPGICIQ) the chain is Cytoplasmic. A helical transmembrane segment spans residues 144-164 (LVAAPHSYSILVALFHTILTF). Residues 165–204 (RLSYCHSNIVNHFYCDDMPLLRLTCSDTRFKQLWIFACAG) lie on the Extracellular side of the membrane. Residues 205 to 225 (IMFISSLLIVFVSYMFIISAI) traverse the membrane as a helical segment. Residues 226 to 239 (LRMHSAEGRQKAFS) are Cytoplasmic-facing. Residues 240 to 260 (TCGSHMLAVTIFYGTLIFMYL) traverse the membrane as a helical segment. Residues 261-272 (QPSSSHALDTDK) are Extracellular-facing. A helical membrane pass occupies residues 273 to 293 (MASVFYTVIIPMLNPLIYSLQ). Residues 294-309 (NKEVKEALKKIIINKN) are Cytoplasmic-facing.

This sequence belongs to the G-protein coupled receptor 1 family.

The protein localises to the cell membrane. Its function is as follows. Odorant receptor. This is Olfactory receptor 8U9 (OR8U9) from Homo sapiens (Human).